The following is a 655-amino-acid chain: DNA mismatch repair protein MutL (655 aa).

Disordered regions lie at residues 357–416 and 439–460; these read EKKQ…DDYT and DFDS…SKDP. Residues 371–383 show a composition bias toward basic and acidic residues; the sequence is SHEEDEKNDDKAY. Over residues 402–416 the composition is skewed to polar residues; it reads NTSVSTSPNSDDDYT.

The protein belongs to the DNA mismatch repair MutL/HexB family.

Functionally, this protein is involved in the repair of mismatches in DNA. It is required for dam-dependent methyl-directed DNA mismatch repair. May act as a 'molecular matchmaker', a protein that promotes the formation of a stable complex between two or more DNA-binding proteins in an ATP-dependent manner without itself being part of a final effector complex. This chain is DNA mismatch repair protein MutL, found in Staphylococcus saprophyticus subsp. saprophyticus (strain ATCC 15305 / DSM 20229 / NCIMB 8711 / NCTC 7292 / S-41).